We begin with the raw amino-acid sequence, 81 residues long: MSHSVKIYDTCIGCTQCVRACPTDVLEMIPWDGCKAKQIAPAPRTEDCVGCKRCESACPTDFLSVRVYLWHETTRSMGLAY.

2 consecutive 4Fe-4S ferredoxin-type domains span residues 2–31 and 39–68; these read SHSVKIYDTCIGCTQCVRACPTDVLEMIPW and IAPAPRTEDCVGCKRCESACPTDFLSVRVY. [4Fe-4S] cluster-binding residues include Cys-11, Cys-14, Cys-17, Cys-21, Cys-48, Cys-51, Cys-54, and Cys-58.

In terms of assembly, the eukaryotic PSI reaction center is composed of at least 11 subunits. Requires [4Fe-4S] cluster as cofactor.

It is found in the plastid. The protein resides in the chloroplast thylakoid membrane. The enzyme catalyses reduced [plastocyanin] + hnu + oxidized [2Fe-2S]-[ferredoxin] = oxidized [plastocyanin] + reduced [2Fe-2S]-[ferredoxin]. Its function is as follows. Apoprotein for the two 4Fe-4S centers FA and FB of photosystem I (PSI); essential for photochemical activity. FB is the terminal electron acceptor of PSI, donating electrons to ferredoxin. The C-terminus interacts with PsaA/B/D and helps assemble the protein into the PSI complex. Required for binding of PsaD and PsaE to PSI. PSI is a plastocyanin-ferredoxin oxidoreductase, converting photonic excitation into a charge separation, which transfers an electron from the donor P700 chlorophyll pair to the spectroscopically characterized acceptors A0, A1, FX, FA and FB in turn. This chain is Photosystem I iron-sulfur center, found in Liriodendron tulipifera (Tuliptree).